The sequence spans 97 residues: Small ribosomal subunit protein bS20c (97 aa).

The span at 1-15 shows a compositional bias: polar residues; it reads MSKNVSAIKKNQVSL. Residues 1–20 are disordered; sequence MSKNVSAIKKNQVSLRNKRK.

The protein belongs to the bacterial ribosomal protein bS20 family.

It localises to the plastid. The protein localises to the chloroplast. In terms of biological role, binds directly to 16S ribosomal RNA. This chain is Small ribosomal subunit protein bS20c, found in Gracilaria tenuistipitata var. liui (Red alga).